A 176-amino-acid polypeptide reads, in one-letter code: Inorganic pyrophosphatase (176 aa).

Residues Lys-31, Arg-45, and Tyr-57 each coordinate substrate. Residues Asp-67, Asp-72, and Asp-104 each coordinate Mg(2+). Position 142 (Tyr-142) interacts with substrate.

This sequence belongs to the PPase family. In terms of assembly, homohexamer. Requires Mg(2+) as cofactor.

Its subcellular location is the cytoplasm. It catalyses the reaction diphosphate + H2O = 2 phosphate + H(+). In terms of biological role, catalyzes the hydrolysis of inorganic pyrophosphate (PPi) forming two phosphate ions. The protein is Inorganic pyrophosphatase of Haemophilus influenzae (strain ATCC 51907 / DSM 11121 / KW20 / Rd).